Reading from the N-terminus, the 131-residue chain is MSMSDPIADMLTRIRNAQAVEKASVVMPSSKLKVAIAKVLKDEGYIDEFAVTEQGGKSTLTIGLKYYAGRPVIERLERVSKPGLRVYKGRNEIPQVMNGLGVAIISTPQGLMTDRRARATGVGGEVICYVA.

It belongs to the universal ribosomal protein uS8 family. As to quaternary structure, part of the 30S ribosomal subunit. Contacts proteins S5 and S12.

One of the primary rRNA binding proteins, it binds directly to 16S rRNA central domain where it helps coordinate assembly of the platform of the 30S subunit. In Ralstonia pickettii (strain 12J), this protein is Small ribosomal subunit protein uS8.